Here is a 691-residue protein sequence, read N- to C-terminus: DNA ligase (691 aa).

NAD(+) is bound by residues 41–45, 90–91, and Glu-130; these read DAEYD and SL. Catalysis depends on Lys-132, which acts as the N6-AMP-lysine intermediate. NAD(+) contacts are provided by Arg-153, Glu-190, Lys-307, and Lys-331. Zn(2+) contacts are provided by Cys-425, Cys-428, Cys-443, and Cys-449. The region spanning 610-691 is the BRCT domain; the sequence is APQGVLAGKT…MHTLLEGHAR (82 aa).

This sequence belongs to the NAD-dependent DNA ligase family. LigA subfamily. It depends on Mg(2+) as a cofactor. Mn(2+) is required as a cofactor.

The enzyme catalyses NAD(+) + (deoxyribonucleotide)n-3'-hydroxyl + 5'-phospho-(deoxyribonucleotide)m = (deoxyribonucleotide)n+m + AMP + beta-nicotinamide D-nucleotide.. Its function is as follows. DNA ligase that catalyzes the formation of phosphodiester linkages between 5'-phosphoryl and 3'-hydroxyl groups in double-stranded DNA using NAD as a coenzyme and as the energy source for the reaction. It is essential for DNA replication and repair of damaged DNA. The chain is DNA ligase from Burkholderia pseudomallei (strain K96243).